The sequence spans 99 residues: Class II hydrophobin 1 (99 aa).

The N-terminal stretch at 1–26 is a signal peptide; it reads MKFIAVVAALTASLAMAAPTESSTDT. 4 cysteine pairs are disulfide-bonded: Cys-31–Cys-80, Cys-41–Cys-71, Cys-42–Cys-54, and Cys-81–Cys-92.

Belongs to the cerato-ulmin hydrophobin family. As to quaternary structure, homotetramer. Further self-assembles to form highly ordered films at water-air interfaces through intermolecular interactions.

The protein localises to the secreted. It is found in the cell wall. Aerial growth, conidiation, and dispersal of filamentous fungi in the environment rely upon a capability of their secreting small amphipathic proteins called hydrophobins (HPBs) with low sequence identity. Class I can self-assemble into an outermost layer of rodlet bundles on aerial cell surfaces, conferring cellular hydrophobicity that supports fungal growth, development and dispersal; whereas Class II form highly ordered films at water-air interfaces through intermolecular interactions but contribute nothing to the rodlet structure. HFB1 is a class II hydrophobin that shows antifungal activity against pathogenic and opportunistic fungi such as Cryptococcus neoformans, Nakaseomyces glabrataa, or Candida tropicalis. This Sodiomyces alkalinus (strain CBS 110278 / VKM F-3762 / F11) (Alkaliphilic filamentous fungus) protein is Class II hydrophobin 1.